The sequence spans 279 residues: Thiazole synthase (279 aa).

Catalysis depends on lysine 116, which acts as the Schiff-base intermediate with DXP. 1-deoxy-D-xylulose 5-phosphate contacts are provided by residues glycine 177, 203-204 (AG), and 225-226 (NS).

This sequence belongs to the ThiG family. In terms of assembly, homotetramer. Forms heterodimers with either ThiH or ThiS.

It is found in the cytoplasm. The enzyme catalyses [ThiS sulfur-carrier protein]-C-terminal-Gly-aminoethanethioate + 2-iminoacetate + 1-deoxy-D-xylulose 5-phosphate = [ThiS sulfur-carrier protein]-C-terminal Gly-Gly + 2-[(2R,5Z)-2-carboxy-4-methylthiazol-5(2H)-ylidene]ethyl phosphate + 2 H2O + H(+). It participates in cofactor biosynthesis; thiamine diphosphate biosynthesis. Its function is as follows. Catalyzes the rearrangement of 1-deoxy-D-xylulose 5-phosphate (DXP) to produce the thiazole phosphate moiety of thiamine. Sulfur is provided by the thiocarboxylate moiety of the carrier protein ThiS. In vitro, sulfur can be provided by H(2)S. The sequence is that of Thiazole synthase from Trichodesmium erythraeum (strain IMS101).